A 259-amino-acid chain; its full sequence is Putative carbamate hydrolase RutD (259 aa).

This sequence belongs to the AB hydrolase superfamily. Hydrolase RutD family.

It carries out the reaction carbamate + 2 H(+) = NH4(+) + CO2. In terms of biological role, involved in pyrimidine catabolism. May facilitate the hydrolysis of carbamate, a reaction that can also occur spontaneously. This is Putative carbamate hydrolase RutD from Pseudomonas savastanoi pv. phaseolicola (strain 1448A / Race 6) (Pseudomonas syringae pv. phaseolicola (strain 1448A / Race 6)).